The primary structure comprises 249 residues: Pleckstrin homology domain-containing family F member 2 (249 aa).

Ser16 is subject to Phosphoserine. One can recognise a PH domain in the interval 35 to 131 (VLIGEGVLTK…WMNHINKCVT (97 aa)). An N6-acetyllysine modification is found at Lys44. The FYVE-type zinc finger occupies 152-212 (DSEATVCMRC…ICDFCYDLLS (61 aa)). Residues Cys158, Cys161, Cys175, Cys178, Cys183, Cys186, Cys204, and Cys207 each coordinate Zn(2+). The segment covering 221 to 233 (PTRSDSYSQSLKS) has biased composition (polar residues). Residues 221–249 (PTRSDSYSQSLKSPLNDASDDDDDDDSSD) are disordered. Positions 238–249 (ASDDDDDDDSSD) are enriched in acidic residues. Residues Ser239 and Ser248 each carry the phosphoserine modification.

May interact with EEA1. Expressed in brain, stomach and thymus, as well as in kidney, spleen, and skeletal muscle. Also expressed in peripheral blood mononuclear cells and dendritic cells.

It localises to the early endosome membrane. Its subcellular location is the endoplasmic reticulum. Functionally, may play a role in early endosome fusion upstream of RAB5, hence regulating receptor trafficking and fluid-phase transport. Enhances cellular sensitivity to TNF-induced apoptosis. This Mus musculus (Mouse) protein is Pleckstrin homology domain-containing family F member 2 (Plekhf2).